Here is an 83-residue protein sequence, read N- to C-terminus: Sulfur carrier protein TusA (83 aa).

C19 serves as the catalytic Cysteine persulfide intermediate.

The protein belongs to the sulfur carrier protein TusA family.

The protein localises to the cytoplasm. Sulfur carrier protein which probably makes part of a sulfur-relay system. This Aliivibrio salmonicida (strain LFI1238) (Vibrio salmonicida (strain LFI1238)) protein is Sulfur carrier protein TusA.